Here is a 1343-residue protein sequence, read N- to C-terminus: DNA-directed RNA polymerase subunit beta (1343 aa).

The protein belongs to the RNA polymerase beta chain family. As to quaternary structure, the RNAP catalytic core consists of 2 alpha, 1 beta, 1 beta' and 1 omega subunit. When a sigma factor is associated with the core the holoenzyme is formed, which can initiate transcription.

The enzyme catalyses RNA(n) + a ribonucleoside 5'-triphosphate = RNA(n+1) + diphosphate. DNA-dependent RNA polymerase catalyzes the transcription of DNA into RNA using the four ribonucleoside triphosphates as substrates. This Shewanella sp. (strain W3-18-1) protein is DNA-directed RNA polymerase subunit beta.